The chain runs to 372 residues: Transaldolase (372 aa).

Lys-140 serves as the catalytic Schiff-base intermediate with substrate.

The protein belongs to the transaldolase family. Type 2 subfamily.

It is found in the cytoplasm. It carries out the reaction D-sedoheptulose 7-phosphate + D-glyceraldehyde 3-phosphate = D-erythrose 4-phosphate + beta-D-fructose 6-phosphate. It participates in carbohydrate degradation; pentose phosphate pathway; D-glyceraldehyde 3-phosphate and beta-D-fructose 6-phosphate from D-ribose 5-phosphate and D-xylulose 5-phosphate (non-oxidative stage): step 2/3. Functionally, transaldolase is important for the balance of metabolites in the pentose-phosphate pathway. In Acidothermus cellulolyticus (strain ATCC 43068 / DSM 8971 / 11B), this protein is Transaldolase.